Here is a 353-residue protein sequence, read N- to C-terminus: Cyclic GMP-AMP synthase-like receptor (353 aa).

ATP is bound by residues Ser-60 and 72–74 (EYD). Residues Glu-72, Asp-74, and Asp-183 each contribute to the Mg(2+) site. Position 183 (Asp-183) interacts with GTP. An ATP-binding site is contributed by Lys-245. Positions 269 and 270 each coordinate Mn(2+).

Belongs to the mab-21 family. Mg(2+) is required as a cofactor. Mn(2+) serves as cofactor.

The enzyme catalyses GTP + ATP = 2',3'-cGAMP + 2 diphosphate. It catalyses the reaction GTP + ATP = pppGp(2'-5')A + diphosphate. It carries out the reaction pppGp(2'-5')A = 2',3'-cGAMP + diphosphate. In terms of biological role, nucleotidyltransferase that catalyzes the formation of cyclic GMP-AMP (2',3'-cGAMP) from ATP and GTP and plays a key role in innate immunity. Acts as a key sensor of double-stranded RNA (dsRNA), the presence of dsRNA in the cytoplasm being a danger signal that triggers the immune responses. Directly binds dsRNA, activating the nucleotidyltransferase activity, leading to synthesis of 2',3'-cGAMP, a second messenger that binds to and activates Sting, thereby triggering the immune response via activation of the NF-kappa-B transcription factor. In Nicrophorus vespilloides (Boreal carrion beetle), this protein is Cyclic GMP-AMP synthase-like receptor.